A 184-amino-acid chain; its full sequence is Large ribosomal subunit protein uL6 (184 aa).

This sequence belongs to the universal ribosomal protein uL6 family. Part of the 50S ribosomal subunit.

In terms of biological role, this protein binds to the 23S rRNA, and is important in its secondary structure. It is located near the subunit interface in the base of the L7/L12 stalk, and near the tRNA binding site of the peptidyltransferase center. This chain is Large ribosomal subunit protein uL6, found in Desulfurococcus amylolyticus (strain DSM 18924 / JCM 16383 / VKM B-2413 / 1221n) (Desulfurococcus kamchatkensis).